A 542-amino-acid polypeptide reads, in one-letter code: MAAKEVKFHSDAREKMLRGVNILADAVKVTLGPKGRNVVIDKSFGAPRITKDGVTVAKEIELEDKFENMGAQMVREVASKTSDLAGDGTTTATVLAQAIVKEGAKAVASGMNPMDLKRGIDKAVEAIVQELKTNARKVTRNDEIAQVGTISANGDAEIGRFLAEAMQKVGNEGVITVEEAKTAETELEVVEGMQFDRGYLSPYFITNQDKMRVELEEPYVLIHEKKLSNLQALLPVLEAVVQSSKPLLIIAEDVEGEALATLVVNKLRGGLKVAAVKAPGFGDRRKAMLEDIAILTGGTAISEDLGIKLENVTLEMLGRAKKVVIEKENTTIVDGAGSKDEIQGRVSQIKSQIEETTSDYDKEKLQERLAKLAGGVAVIRVGGSTEVEVKERKDRVDDAMHATRAAVEEGVLPGGGVALLRAAKALDSVQAENEDQKHGIEIVRRAIEAPVRQIAENAGAEGSIIVGKLREKPEFGWGWNAQTNAFGDLYNEGVIDPVKVVRTALQDAASVAGLLVTTEAMVAEKPKKEPAVPAMPAGGMDF.

Residues 30–33, Lys51, 87–91, Gly415, and Asp496 contribute to the ATP site; these read TLGP and DGTTT.

Belongs to the chaperonin (HSP60) family. Forms a cylinder of 14 subunits composed of two heptameric rings stacked back-to-back. Interacts with the co-chaperonin GroES.

The protein localises to the cytoplasm. It carries out the reaction ATP + H2O + a folded polypeptide = ADP + phosphate + an unfolded polypeptide.. Its function is as follows. Together with its co-chaperonin GroES, plays an essential role in assisting protein folding. The GroEL-GroES system forms a nano-cage that allows encapsulation of the non-native substrate proteins and provides a physical environment optimized to promote and accelerate protein folding. This is Chaperonin GroEL 2 from Mesorhizobium japonicum (strain LMG 29417 / CECT 9101 / MAFF 303099) (Mesorhizobium loti (strain MAFF 303099)).